Reading from the N-terminus, the 811-residue chain is Glycerol-3-phosphate acyltransferase (811 aa).

The short motif at 308–313 (CHRSHM) is the HXXXXD motif element.

Belongs to the GPAT/DAPAT family.

The protein localises to the cell inner membrane. The catalysed reaction is sn-glycerol 3-phosphate + an acyl-CoA = a 1-acyl-sn-glycero-3-phosphate + CoA. It participates in phospholipid metabolism; CDP-diacylglycerol biosynthesis; CDP-diacylglycerol from sn-glycerol 3-phosphate: step 1/3. The polypeptide is Glycerol-3-phosphate acyltransferase (Pseudoalteromonas atlantica (strain T6c / ATCC BAA-1087)).